A 317-amino-acid polypeptide reads, in one-letter code: Methionyl-tRNA formyltransferase (317 aa).

S112 to P115 lines the (6S)-5,6,7,8-tetrahydrofolate pocket.

The protein belongs to the Fmt family.

It catalyses the reaction L-methionyl-tRNA(fMet) + (6R)-10-formyltetrahydrofolate = N-formyl-L-methionyl-tRNA(fMet) + (6S)-5,6,7,8-tetrahydrofolate + H(+). Attaches a formyl group to the free amino group of methionyl-tRNA(fMet). The formyl group appears to play a dual role in the initiator identity of N-formylmethionyl-tRNA by promoting its recognition by IF2 and preventing the misappropriation of this tRNA by the elongation apparatus. This Histophilus somni (strain 2336) (Haemophilus somnus) protein is Methionyl-tRNA formyltransferase.